A 1266-amino-acid chain; its full sequence is Rho GTPase-activating protein 29 (1266 aa).

4 positions are modified to phosphoserine: serine 171, serine 176, serine 179, and serine 190. The F-BAR domain maps to 192–462 (IELDNLLLKN…SAKLYDPGQE (271 aa)). A coiled-coil region spans residues 296–418 (RKNEMEKQRK…EILTQLRTLV (123 aa)). The tract at residues 482 to 501 (NVNKQMTNSPQTSGYEPADS) is disordered. The span at 483–495 (VNKQMTNSPQTSG) shows a compositional bias: polar residues. 3 positions are modified to phosphoserine: serine 501, serine 521, and serine 554. Residues 542–561 (DSESTGGSSESRSLDSESIS) are compositionally biased toward low complexity. A disordered region spans residues 542–601 (DSESTGGSSESRSLDSESISPGDFHRKLPRTPSSGTMSSADDLDEREPPSPSEAGPNSLG). The segment at 614 to 659 (THKFRKLRSPTKCRDCDGIVMFPGVECEECLLVCHRKCLENLVIIC) adopts a Phorbol-ester/DAG-type zinc-finger fold. The Rho-GAP domain maps to 673–888 (AEFIQVAKKE…FLITYSQKIF (216 aa)). Serine 920, serine 956, and serine 1028 each carry phosphoserine. Disordered stretches follow at residues 1039-1081 (SSPT…KVNG), 1116-1157 (GLTV…ATAV), and 1209-1266 (KSDP…PQFV). The span at 1072–1081 (SNTTRSKVNG) shows a compositional bias: polar residues. Residues 1124–1136 (NRDHPGSKAHAEP) are compositionally biased toward basic and acidic residues. Phosphoserine is present on residues serine 1149 and serine 1151. The span at 1256–1266 (EDLEDEIPQFV) shows a compositional bias: acidic residues. Positions 1263 to 1266 (PQFV) are interaction with PTPN13/PTPL1.

Interacts with PTPN13/PTPL1. Interacts with RAP2A via its coiled coil domain. Interacts with RASIP1.

In terms of biological role, GTPase activator for the Rho-type GTPases by converting them to an inactive GDP-bound state. Has strong activity toward RHOA, and weaker activity toward RAC1 and CDC42. May act as a specific effector of RAP2A to regulate Rho. In concert with RASIP1, suppresses RhoA signaling and dampens ROCK and MYH9 activities in endothelial cells and plays an essential role in blood vessel tubulogenesis. This chain is Rho GTPase-activating protein 29 (Arhgap29), found in Mus musculus (Mouse).